The sequence spans 129 residues: Follitropin subunit beta (129 aa).

An N-terminal signal peptide occupies residues 1-18; sequence MKSVQFCFLFCCWRAICC. Cystine bridges form between Cys-21–Cys-69, Cys-35–Cys-84, Cys-38–Cys-122, Cys-46–Cys-100, Cys-50–Cys-102, and Cys-105–Cys-112. Asn-25 and Asn-42 each carry an N-linked (GlcNAc...) asparagine glycan.

It belongs to the glycoprotein hormones subunit beta family. Heterodimer. The active follitropin is a heterodimer composed of an alpha chain/CGA shared with other hormones and a unique beta chain/FSHB shown here.

It localises to the secreted. Its function is as follows. Together with the alpha chain CGA constitutes follitropin, the follicle-stimulating hormone, and provides its biological specificity to the hormone heterodimer. Binds FSHR, a G protein-coupled receptor, on target cells to activate downstream signaling pathways. Follitropin is involved in follicle development and spermatogenesis in reproductive organs. In Capra hircus (Goat), this protein is Follitropin subunit beta (FSHB).